The following is a 513-amino-acid chain: V-type proton ATPase subunit B, kidney isoform (513 aa).

Residue arginine 394 coordinates ATP. A PDZ-binding motif is present at residues 510–513 (DTAL).

Belongs to the ATPase alpha/beta chains family. In terms of assembly, V-ATPase is a heteromultimeric enzyme made up of two complexes: the ATP-hydrolytic V1 complex and the proton translocation V0 complex. The V1 complex consists of three catalytic AB heterodimers that form a heterohexamer, three peripheral stalks each consisting of EG heterodimers, one central rotor including subunits D and F, and the regulatory subunits C and H. The proton translocation complex V0 consists of the proton transport subunit a, a ring of proteolipid subunits c9c'', rotary subunit d, subunits e and f, and the accessory subunits ATP6AP1/Ac45 and ATP6AP2/PRR. Forms a complex with NHERF1 and SCL4A7. As to expression, kidney; localizes to early distal nephron, encompassing thick ascending limbs and distal convoluted tubules (at protein level). Expressed in the cochlea and endolymphatic sac.

The protein localises to the apical cell membrane. Its subcellular location is the basolateral cell membrane. Functionally, non-catalytic subunit of the V1 complex of vacuolar(H+)-ATPase (V-ATPase), a multisubunit enzyme composed of a peripheral complex (V1) that hydrolyzes ATP and a membrane integral complex (V0) that translocates protons. V-ATPase is responsible for acidifying and maintaining the pH of intracellular compartments and in some cell types, is targeted to the plasma membrane, where it is responsible for acidifying the extracellular environment. Essential for the proper assembly and activity of V-ATPase. In renal intercalated cells, mediates secretion of protons (H+) into the urine thereby ensuring correct urinary acidification. Required for optimal olfactory function by mediating the acidification of the nasal olfactory epithelium. The chain is V-type proton ATPase subunit B, kidney isoform (ATP6V1B1) from Homo sapiens (Human).